The following is a 372-amino-acid chain: O-methyltransferase bfoE (372 aa).

Trp-186 provides a ligand contact to S-adenosyl-L-methionine. The Proton acceptor role is filled by His-285.

Belongs to the class I-like SAM-binding methyltransferase superfamily. Cation-independent O-methyltransferase family.

Its pathway is secondary metabolite biosynthesis. In terms of biological role, cytochrome P450 monooxygenase; part of the gene cluster that mediates the biosynthesis of bifonsecin B, a dimeric gamma-naphthopyrone. The first step in the biosynthesis of bifonsecin B is the production of gamma-naphthopyrone precursor YWA1 by the non-reducing polyketide synthase albA, via condensation of one acetyl-CoA starter unit with 6 malonyl-CoA units. YWA1 is then methylated by bfoE at position C-6 to yield foncesin which is further methylated at position C-8 by bfoD to produce fonsecin B. A key enzyme in the biosynthetic pathway is the cytochrome P450 monooxygenase bfoB which catalyzes the oxidative dimerization of fonsecin B to bifonsecin B. Bfob also catalyzes the oxidative dimerization of rubrofusarin B into nigerone. The stereoselectivity of bfoB is influenced by the two natural monomeric substrates; homodimerization of fonsecin B yields a stereochemically pure biaryl, M-foncerine B, while rubrofusarin B yields a mixture of enantiomers M- and P-nigerone. In Aspergillus brasiliensis (strain CBS 101740 / IMI 381727 / IBT 21946), this protein is O-methyltransferase bfoE.